The chain runs to 540 residues: Glucose-6-phosphate isomerase (540 aa).

The Proton donor role is filled by Glu-350. Active-site residues include His-381 and Lys-503.

The protein belongs to the GPI family.

The protein localises to the cytoplasm. The enzyme catalyses alpha-D-glucose 6-phosphate = beta-D-fructose 6-phosphate. It functions in the pathway carbohydrate biosynthesis; gluconeogenesis. Its pathway is carbohydrate degradation; glycolysis; D-glyceraldehyde 3-phosphate and glycerone phosphate from D-glucose: step 2/4. Its function is as follows. Catalyzes the reversible isomerization of glucose-6-phosphate to fructose-6-phosphate. The polypeptide is Glucose-6-phosphate isomerase (Paraburkholderia xenovorans (strain LB400)).